Here is a 427-residue protein sequence, read N- to C-terminus: Trigger factor (427 aa).

The 86-residue stretch at 163-248 folds into the PPIase FKBP-type domain; the sequence is GDTVVIDFVG…IHEVKTKEVP (86 aa).

The protein belongs to the FKBP-type PPIase family. Tig subfamily.

Its subcellular location is the cytoplasm. The enzyme catalyses [protein]-peptidylproline (omega=180) = [protein]-peptidylproline (omega=0). In terms of biological role, involved in protein export. Acts as a chaperone by maintaining the newly synthesized protein in an open conformation. Functions as a peptidyl-prolyl cis-trans isomerase. This is Trigger factor from Streptococcus agalactiae serotype III (strain NEM316).